Here is a 110-residue protein sequence, read N- to C-terminus: Putative protein RIG (110 aa).

Expressed predominantly in brain and weakly in heart and lung. Expression is reduced or undetectable in cultured glioma cells, primary glioblastoma cells and malignant glioblastoma tumors.

Its function is as follows. May serve as a molecular marker for or play a role in the malignant progression of glioblastomas. This chain is Putative protein RIG (RIG), found in Homo sapiens (Human).